We begin with the raw amino-acid sequence, 84 residues long: Transmembrane protein EP84R (84 aa).

Transmembrane regions (helical) follow at residues Val-31–Leu-51 and Ala-60–Tyr-80.

This sequence belongs to the asfivirus EP84R family.

The protein localises to the virion membrane. The protein is Transmembrane protein EP84R of Ornithodoros (relapsing fever ticks).